The following is a 681-amino-acid chain: MADSTGLQFTVKVGALPENTFVVAEFALDEALNRPFNLRLELASAQPDIDFGAVLDQPCELLVWYNGELQRRVCGVVSDFAQGDSGFRRTRYQLRVLPALWRLSLRQNSRIFQAQKPDEILSILLQEHGITDYAFALKNEHAKREYCVQYRESDLDFVNRLAAEEGMFYFHEFEAGKHRIVFADDAAALTQGPELFFNLGNRSLEQGPYVRQFHYREAVRPSDVELKDYSFKTPAYGLSHKKVGAELTHQRDTYQHFDFPGRYKEDPSGKAFAQHRLDALRNDAVAGQAKSNCAALLPGQSFSLTEHPNGSLNTDWQIVRIQHTGLQPQALEEEGGSGPTVYHNEFGVVKASTTWRARIGSPEAPHKPMVDGPQIAIVVGPDGEEIYCDEHGRVKLQFPWDRYGSSNDQSSCWVRVSQGWAGGQYGMMAIPRIGHEVIVSFLEGDPDQPIVTGRTYHATNRPPYELPANKTRTVLRTETHQGEGFNELRFEDQVGQEEIYIHGQKDLNVLIENDAAWHIKHDEHTDVDNERVTRIKANDHLTVEGEKRDQIKADYSLTVDTSMHQKLGDSWLTQAGQEVHVKAGAKVVLEAGSEITVKVGGCFIKVDGGGVTLVGPTIKMNSGGSPSSGSGWGGKSPVDPLGVSVPPKPKVPLTPAQLATMKSAAPFCEECEKCKEGGCEI.

The segment at 621-640 (NSGGSPSSGSGWGGKSPVDP) is disordered.

The protein belongs to the VgrG protein family.

It localises to the secreted. The enzyme catalyses L-arginyl-[protein] + NAD(+) = N(omega)-(ADP-D-ribosyl)-L-arginyl-[protein] + nicotinamide + H(+). Its function is as follows. Part of the type VI secretion system specialized secretion system, which delivers several virulence factors in both prokaryotic and eukaryotic cells during infection. Acts directly as an secreted effector with an actin ADP-ribosyltransferase activity that disrupts the host actin cytoskeleton, leading to a decrease in host cell viability and an increase in apoptosis. This chain is Type VI secretion system spike protein VgrG1 (vgrG1), found in Aeromonas hydrophila.